Consider the following 335-residue polypeptide: Glycerol-3-phosphate dehydrogenase [NAD(P)+] (335 aa).

NADPH contacts are provided by W12 and K106. Sn-glycerol 3-phosphate contacts are provided by K106, G136, and S138. An NADPH-binding site is contributed by A140. Sn-glycerol 3-phosphate-binding residues include K191, D244, S254, R255, and N256. Catalysis depends on K191, which acts as the Proton acceptor. R255 contacts NADPH. NADPH contacts are provided by V279 and E281.

This sequence belongs to the NAD-dependent glycerol-3-phosphate dehydrogenase family.

The protein localises to the cytoplasm. It carries out the reaction sn-glycerol 3-phosphate + NAD(+) = dihydroxyacetone phosphate + NADH + H(+). The enzyme catalyses sn-glycerol 3-phosphate + NADP(+) = dihydroxyacetone phosphate + NADPH + H(+). It participates in membrane lipid metabolism; glycerophospholipid metabolism. Catalyzes the reduction of the glycolytic intermediate dihydroxyacetone phosphate (DHAP) to sn-glycerol 3-phosphate (G3P), the key precursor for phospholipid synthesis. The sequence is that of Glycerol-3-phosphate dehydrogenase [NAD(P)+] from Fusobacterium nucleatum subsp. nucleatum (strain ATCC 25586 / DSM 15643 / BCRC 10681 / CIP 101130 / JCM 8532 / KCTC 2640 / LMG 13131 / VPI 4355).